A 343-amino-acid polypeptide reads, in one-letter code: N-acetyl-gamma-glutamyl-phosphate reductase (343 aa).

The active site involves C146.

This sequence belongs to the NAGSA dehydrogenase family. Type 1 subfamily.

It is found in the cytoplasm. The enzyme catalyses N-acetyl-L-glutamate 5-semialdehyde + phosphate + NADP(+) = N-acetyl-L-glutamyl 5-phosphate + NADPH + H(+). The protein operates within amino-acid biosynthesis; L-arginine biosynthesis; N(2)-acetyl-L-ornithine from L-glutamate: step 3/4. In terms of biological role, catalyzes the NADPH-dependent reduction of N-acetyl-5-glutamyl phosphate to yield N-acetyl-L-glutamate 5-semialdehyde. This chain is N-acetyl-gamma-glutamyl-phosphate reductase, found in Arthrobacter sp. (strain FB24).